The following is a 197-amino-acid chain: Protein-S-isoprenylcysteine O-methyltransferase A (197 aa).

3 helical membrane passes run 16–36, 52–72, and 81–101; these read MLLSLIFFHISEYILAITIHG, ALAMLLSLLEYLTEIILFPGL, and FGLIMIIVGEIIRKAAIITAG. S-adenosyl-L-methionine contacts are provided by residues 116–119, Tyr-124, and 129–132; these read HGLV and HPSY. Residues 140–160 form a helical membrane-spanning segment; that stretch reads VGTQVMLCNPVSAVAFAVVVW. Arg-166 serves as a coordination point for substrate. Glu-170 provides a ligand contact to S-adenosyl-L-methionine.

Belongs to the class VI-like SAM-binding methyltransferase superfamily. Isoprenylcysteine carboxyl methyltransferase family. Zn(2+) serves as cofactor. As to expression, expressed primarily in flowers, stems, leaves and roots. Almost not expressed in siliques. Detected in root tips and vascular tissues of roots, cotyledons, petiols, hypocotyls, filaments, pollen grains and the distal and proximal portions of the gynoecium.

It is found in the endoplasmic reticulum membrane. It carries out the reaction [protein]-C-terminal S-[(2E,6E)-farnesyl]-L-cysteine + S-adenosyl-L-methionine = [protein]-C-terminal S-[(2E,6E)-farnesyl]-L-cysteine methyl ester + S-adenosyl-L-homocysteine. Inhibited by farnesylthioacetic acid (FTAA) and N-acetyl-S-trans, trans-farnesyl-l-cysteine (AFC). Functionally, catalyzes the post-translational methylation of isoprenylated C-terminal cysteine residues, resulting in the modulation of the function of prenylated proteins. Involved in negative regulation of abscisic acid signaling. Carboxyl methylation is a reversible and potentially regulated step in the post-translational modification of prenylated proteins. The protein is Protein-S-isoprenylcysteine O-methyltransferase A of Arabidopsis thaliana (Mouse-ear cress).